The following is an 89-amino-acid chain: Small ribosomal subunit protein bS16c (89 aa).

This sequence belongs to the bacterial ribosomal protein bS16 family.

The protein resides in the plastid. It is found in the chloroplast. This Glycine max (Soybean) protein is Small ribosomal subunit protein bS16c.